Consider the following 395-residue polypeptide: Acid ceramidase (395 aa).

A signal peptide spans 1–21 (MLGRSRLALVLLAAAVSCAVA). Cys31 and Cys340 are oxidised to a cystine. The active-site Nucleophile is the Cys143. N-linked (GlcNAc...) asparagine glycosylation is found at Asn173, Asn195, Asn259, Asn286, Asn342, and Asn348. An intrachain disulfide couples Cys388 to Cys392.

The protein belongs to the acid ceramidase family. Heterodimer; disulfide-linked. The heterodimer is composed of the disulfide-linked alpha and beta chains produced by autocatalytic cleavage of the precursor. Post-translationally, N-glycosylated. Proteolytically cleaved into two chains alpha and beta that remain associated via a disulfide bond. Cleavage gives rise to a conformation change that activates the enzyme. The same catalytic Cys residue mediates the autoproteolytic cleavage and subsequent hydrolysis of lipid substrates. The beta chain may undergo an additional C-terminal processing.

It is found in the lysosome. The protein resides in the secreted. The catalysed reaction is an N-acylsphing-4-enine + H2O = sphing-4-enine + a fatty acid. It carries out the reaction N-dodecanoylsphing-4-enine + H2O = dodecanoate + sphing-4-enine. It catalyses the reaction N-tetradecanoylsphing-4-enine + H2O = tetradecanoate + sphing-4-enine. The enzyme catalyses N-hexadecanoylsphing-4-enine + H2O = sphing-4-enine + hexadecanoate. The catalysed reaction is N-octadecanoylsphing-4-enine + H2O = sphing-4-enine + octadecanoate. It carries out the reaction N-dodecanoyl-(4R)-hydroxysphinganine + H2O = (4R)-hydroxysphinganine + dodecanoate. It catalyses the reaction N-(dodecanoyl)-sphinganine + H2O = dodecanoate + sphinganine. The enzyme catalyses N-(acetyl)-sphing-4-enine + H2O = sphing-4-enine + acetate. The catalysed reaction is N-(hexanoyl)sphing-4-enine + H2O = hexanoate + sphing-4-enine. It carries out the reaction N-octanoylsphing-4-enine + H2O = octanoate + sphing-4-enine. It catalyses the reaction N-(9Z-octadecenoyl)-sphing-4-enine + H2O = sphing-4-enine + (9Z)-octadecenoate. The enzyme catalyses N-dodecanoylethanolamine + H2O = dodecanoate + ethanolamine. It functions in the pathway lipid metabolism; sphingolipid metabolism. In terms of biological role, lysosomal ceramidase that hydrolyzes sphingolipid ceramides into sphingosine and free fatty acids at acidic pH. Ceramides, sphingosine, and its phosphorylated form sphingosine-1-phosphate are bioactive lipids that mediate cellular signaling pathways regulating several biological processes including cell proliferation, apoptosis and differentiation. Has a higher catalytic efficiency towards C12-ceramides versus other ceramides. Also catalyzes the reverse reaction allowing the synthesis of ceramides from fatty acids and sphingosine. For the reverse synthetic reaction, the natural sphingosine D-erythro isomer is more efficiently utilized as a substrate compared to D-erythro-dihydrosphingosine and D-erythro-phytosphingosine, while the fatty acids with chain lengths of 12 or 14 carbons are the most efficiently used. Also has an N-acylethanolamine hydrolase activity. By regulating the levels of ceramides, sphingosine and sphingosine-1-phosphate in the epidermis, mediates the calcium-induced differentiation of epidermal keratinocytes. Also indirectly regulates tumor necrosis factor/TNF-induced apoptosis. By regulating the intracellular balance between ceramides and sphingosine, in adrenocortical cells, probably also acts as a regulator of steroidogenesis. This Macaca fascicularis (Crab-eating macaque) protein is Acid ceramidase.